A 35-amino-acid chain; its full sequence is MEALVYTFLLIGTLGIIFFAIFFREPPRLPVKGKK.

Residues 3–23 (ALVYTFLLIGTLGIIFFAIFF) form a helical membrane-spanning segment.

Belongs to the PsbT family. As to quaternary structure, PSII is composed of 1 copy each of membrane proteins PsbA, PsbB, PsbC, PsbD, PsbE, PsbF, PsbH, PsbI, PsbJ, PsbK, PsbL, PsbM, PsbT, PsbY, PsbZ, Psb30/Ycf12, at least 3 peripheral proteins of the oxygen-evolving complex and a large number of cofactors. It forms dimeric complexes.

It localises to the plastid. The protein resides in the chloroplast thylakoid membrane. Its function is as follows. Found at the monomer-monomer interface of the photosystem II (PS II) dimer, plays a role in assembly and dimerization of PSII. PSII is a light-driven water plastoquinone oxidoreductase, using light energy to abstract electrons from H(2)O, generating a proton gradient subsequently used for ATP formation. This Coleochaete orbicularis (Charophycean green alga) protein is Photosystem II reaction center protein T.